The chain runs to 300 residues: Ribosomal protein L11 methyltransferase (300 aa).

S-adenosyl-L-methionine contacts are provided by Thr-152, Gly-173, Asp-195, and Asn-234.

It belongs to the methyltransferase superfamily. PrmA family.

The protein resides in the cytoplasm. It catalyses the reaction L-lysyl-[protein] + 3 S-adenosyl-L-methionine = N(6),N(6),N(6)-trimethyl-L-lysyl-[protein] + 3 S-adenosyl-L-homocysteine + 3 H(+). In terms of biological role, methylates ribosomal protein L11. The protein is Ribosomal protein L11 methyltransferase of Burkholderia cenocepacia (strain HI2424).